The primary structure comprises 356 residues: cGAMP-activated phospholipase (356 aa).

Positions 15–206 constitute a PNPLA domain; the sequence is LSLNGGGARG…VANNPSYIGL (192 aa). Positions 19-24 match the GXGXXG motif; that stretch reads GGGARG. Residues 58–62 carry the GXSXG motif; it reads GTSIG. The Nucleophile role is filled by Ser60. Asp193 (proton acceptor) is an active-site residue. A DGA/G motif is present at residues 193–195; the sequence is DGG.

It belongs to the patatin family.

The catalysed reaction is a 1,2-diacyl-sn-glycero-3-phosphocholine + H2O = a 2-acyl-sn-glycero-3-phosphocholine + a fatty acid + H(+). It carries out the reaction 1,2-di-(9Z-octadecenoyl)-sn-glycero-3-phosphoethanolamine + 2 H2O = sn-glycero-3-phosphoethanolamine + 2 (9Z)-octadecenoate + 2 H(+). With respect to regulation, phospholipase activity is specifically activated upon 3',3'-cGAMP binding, which is produced by the cognate cyclic nucleotide synthase encoded in the same operon. Its function is as follows. Effector phospholipase of a CBASS antiviral system. CBASS (cyclic oligonucleotide-based antiphage signaling system) provides immunity against bacteriophages. The CD-NTase protein (DncV) synthesizes cyclic nucleotides in response to infection; these serve as specific second messenger signals. The signals activate a diverse range of effectors, leading to bacterial cell death and thus abortive phage infection. A type II-A(GA) CBASS system. In terms of biological role, phospholipase that is activated upon binding to the cyclic dinucleotide (CDN) second messenger 3',3'-cyclic GMP-AMP (cGAMP). Degrades phospholipids in the cell membrane. Functionally, protects E.coli against phage infection. When capV and dncV are introduced in E.coli MG1655 there is 1000-fold protection against phage P1; protection against other phage (T2, T4, T5, T6 and lambda-vir) requires the 2 subsequent genes (cap2 and cap3). Upon P1 phage infection the activating molecule is produced between 30 and 40 minutes. Activation leads to bacterial cell lysis and death, which occurs before the phage has finished its replication cycle, thus protecting non-infected bacteria by aborting the phage infection and preventing its propagation. In another paper the capV-dncV-cap2-cap3 operon gives 10(4)-10(5)-fold protection against phages lambda, T2, T4 and T6, about 1000-fold protection against P1 and 10-fold protection against T5. The sequence is that of cGAMP-activated phospholipase from Escherichia coli (strain TW11681).